The chain runs to 441 residues: Ribulose bisphosphate carboxylase large chain (441 aa).

Lys-5 bears the N6,N6,N6-trimethyllysine mark. Substrate-binding residues include Asn-114 and Thr-164. Residue Lys-166 is the Proton acceptor of the active site. Lys-168 is a binding site for substrate. Mg(2+)-binding residues include Lys-192, Asp-194, and Glu-195. Lys-192 carries the post-translational modification N6-carboxylysine. The active-site Proton acceptor is the His-285. Substrate is bound by residues Arg-286, His-318, and Ser-370.

Belongs to the RuBisCO large chain family. Type I subfamily. As to quaternary structure, heterohexadecamer of 8 large chains and 8 small chains; disulfide-linked. The disulfide link is formed within the large subunit homodimers. Mg(2+) serves as cofactor. Post-translationally, the disulfide bond which can form in the large chain dimeric partners within the hexadecamer appears to be associated with oxidative stress and protein turnover.

The protein resides in the plastid. Its subcellular location is the chloroplast. It catalyses the reaction 2 (2R)-3-phosphoglycerate + 2 H(+) = D-ribulose 1,5-bisphosphate + CO2 + H2O. The catalysed reaction is D-ribulose 1,5-bisphosphate + O2 = 2-phosphoglycolate + (2R)-3-phosphoglycerate + 2 H(+). RuBisCO catalyzes two reactions: the carboxylation of D-ribulose 1,5-bisphosphate, the primary event in carbon dioxide fixation, as well as the oxidative fragmentation of the pentose substrate in the photorespiration process. Both reactions occur simultaneously and in competition at the same active site. The polypeptide is Ribulose bisphosphate carboxylase large chain (Begonia metallica x Begonia sanguinea).